The following is a 133-amino-acid chain: Small ribosomal subunit protein uS8 (133 aa).

The interval 1–30 is disordered; it reads MANHDPISDMLTRIRNASEKRHETTKVPAS. The span at 16–25 shows a compositional bias: basic and acidic residues; sequence NASEKRHETT.

It belongs to the universal ribosomal protein uS8 family. Part of the 30S ribosomal subunit. Contacts proteins S5 and S12.

In terms of biological role, one of the primary rRNA binding proteins, it binds directly to 16S rRNA central domain where it helps coordinate assembly of the platform of the 30S subunit. The sequence is that of Small ribosomal subunit protein uS8 from Synechococcus sp. (strain CC9902).